Consider the following 328-residue polypeptide: UPF0421 protein SAR1980 (328 aa).

4 helical membrane passes run isoleucine 19–isoleucine 39, leucine 61–glutamine 81, valine 108–phenylalanine 128, and threonine 132–proline 152.

It belongs to the UPF0421 family.

The protein resides in the cell membrane. The sequence is that of UPF0421 protein SAR1980 from Staphylococcus aureus (strain MRSA252).